A 609-amino-acid chain; its full sequence is Protein kinase PVPK-1 (609 aa).

Residues 1-19 (MESSVNGVDSLSEVQNSVS) are compositionally biased toward polar residues. Disordered stretches follow at residues 1–51 (MESS…GHQT) and 80–100 (PTKL…EPNG). The 337-residue stretch at 229-565 (FRLLKKLGCG…ATEIKQHPFF (337 aa)) folds into the Protein kinase domain. ATP-binding positions include 235–243 (LGCGDIGSV) and lysine 258. Aspartate 354 functions as the Proton acceptor in the catalytic mechanism. The disordered stretch occupies residues 429–448 (GKSKKDKKSKPKNDMHNQVT).

It belongs to the protein kinase superfamily. Ser/Thr protein kinase family.

The catalysed reaction is L-seryl-[protein] + ATP = O-phospho-L-seryl-[protein] + ADP + H(+). It catalyses the reaction L-threonyl-[protein] + ATP = O-phospho-L-threonyl-[protein] + ADP + H(+). In Phaseolus vulgaris (Kidney bean), this protein is Protein kinase PVPK-1.